The sequence spans 1325 residues: Sperm-specific sodium:proton exchanger (1325 aa).

The signal sequence occupies residues 1-29; the sequence is MKKRVVKLRELVPAVAALAVAVLIQSATG. A disordered region spans residues 28-68; sequence TGSSGGSGHTPTTQATHADDHDLTTHNGTEEHDDGHDDGHD. Topologically, residues 30-76 are extracellular; sequence SSGGSGHTPTTQATHADDHDLTTHNGTEEHDDGHDDGHDDLHAHAPK. The segment covering 44–68 has biased composition (basic and acidic residues); it reads HADDHDLTTHNGTEEHDDGHDDGHD. Residue H73 participates in a 1,2-diacylglycero-3-phosphate binding. The helical transmembrane segment at 77 to 96 threads the bilayer; sequence VIVFISGSCLFGAISRSLFK. The Cytoplasmic portion of the chain corresponds to 97-101; that stretch reads KLPIP. A helical transmembrane segment spans residues 102–119; it reads YTVVLLILGAILGVVASN. At 120 to 135 the chain is on the extracellular side; it reads VPLVEEHTRDVAHMDP. The helical transmembrane segment at 136-152 threads the bilayer; it reads HVLLQIFLPVLIFESAF. The Cytoplasmic segment spans residues 153 to 162; that stretch reads AMDVHTFMRS. A helical membrane pass occupies residues 163–188; that stretch reads FSQVCILALFGLVVASVLTAVLAMNL. The transport core domain stretch occupies residues 163–250; it reads FSQVCILALF…AIVIFNVFMK (88 aa). Residues 189–194 are Extracellular-facing; that stretch reads FNYNWN. A helical transmembrane segment spans residues 195–220; it reads FSEAMMFGAIMSATDPVAVVALLKDL. Over 221 to 223 the chain is Cytoplasmic; the sequence is GAS. A helical membrane pass occupies residues 224-249; the sequence is KQLGTIIEGESLLNDGCAIVIFNVFM. Positions 237-238 match the Essential for sodium:proton exchange motif; it reads ND. Residues 250-260 lie on the Extracellular side of the membrane; the sequence is KMVFFPQLTST. The chain crosses the membrane as a helical span at residues 261-292; that stretch reads VGQNVLYFLQVAVAGPLWGYAVAKVTVFFLSH. At 293 to 296 the chain is on the cytoplasmic side; it reads IFND. The helical transmembrane segment at 297–319 threads the bilayer; sequence ALVEITITLAATYLTYYIGDIWL. At 320 to 322 the chain is on the extracellular side; that stretch reads EVS. Residues 323–336 form a helical membrane-spanning segment; the sequence is GVLAVVVLGLIVNA. Residues 337 to 343 lie on the Cytoplasmic side of the membrane; sequence EKTSISP. The chain crosses the membrane as a helical span at residues 344 to 377; that stretch reads EVEVFLHRFWEMLAYLANTLIFMMVGVVVTQKAL. The Extracellular segment spans residues 378–382; it reads VAVDK. The helical transmembrane segment at 383–412 threads the bilayer; that stretch reads MDWFYLIILYLAITIIRGMVISLFSPILSR. The transport core domain stretch occupies residues 383 to 481; sequence MDWFYLIILY…TTIQTLLRIL (99 aa). Residues 413–418 are Cytoplasmic-facing; that stretch reads IGYGLT. A helical transmembrane segment spans residues 419-446; that stretch reads WRNAVIMTWGGLRGAVGLALALVVENLA. Residues 447-450 lie on the Extracellular side of the membrane; it reads GNDV. Residues 451 to 481 form a helical membrane-spanning segment; sequence IGSKFLFHTAGIVVLTLVINATTIQTLLRIL. Over 482-677 the chain is Cytoplasmic; it reads GMSDISIPKR…GKLMYKICHH (196 aa). An interacts with the S4 segment of voltage sensor domain region spans residues 575-620; it reads FADMMEEARLRMLKAEKISYWKQFEHGMLAREALRLLVQHAEVAAD. Residues 605 to 620 are interacts with the transport core domain; can lock the transporter in the inward conformation; the sequence is REALRLLVQHAEVAAD. A helical membrane pass occupies residues 678-708; it reads MAFEVTINIAIVLNIVPIIMEFVVQDKMASV. Residues 709-724 lie on the Extracellular side of the membrane; the sequence is STMAAPGSTVSSEPSS. A helical transmembrane segment spans residues 725-752; the sequence is LQKIEDALRISNYVFFVIYAIEAIVKIL. Over 753–760 the chain is Cytoplasmic; it reads GLGRHYIV. Residues 761 to 784 traverse the membrane as a helical segment; it reads SHWNKFDAFILVVALVDIIIAETL. Residues 785–795 are Extracellular-facing; the sequence is LKGSITINLSS. The helical transmembrane segment at 796-822 threads the bilayer; it reads IKVVKLFRLLRGLRMLRLTKALIPKLI. The segment at 796-857 is S4 segment of voltage sensor domain; that stretch reads IKVVKLFRLL…EEVGKIIDRM (62 aa). At 823 to 1325 the chain is on the cytoplasmic side; that stretch reads LVVNGKINNQ…EEGAAPRVNV (503 aa). An interacts with the S4 segment of voltage sensor domain region spans residues 860–919; the sequence is NKKILRELKHISETGRLQVVKELGLLQREHPGIAVSVKTRQAIRTILNHSRETIHELQGA. Residues 968–1068 form a cNMP-binding domain region; that stretch reads KLIDFIKARA…CETTVQVYFI (101 aa). Residue G1043 coordinates 3',5'-cyclic AMP. 3',5'-cyclic GMP-binding residues include G1043, E1044, and M1045. 3',5'-cyclic AMP contacts are provided by M1045, G1046, R1053, and N1054. 3',5'-cyclic GMP is bound by residues R1053 and N1054. A disordered region spans residues 1237-1325; that stretch reads MLSRKSSGAA…EEGAAPRVNV (89 aa). Over residues 1266 to 1280 the composition is skewed to low complexity; the sequence is VSPSVPTKTTPKPKS.

The protein belongs to the monovalent cation:proton antiporter 1 (CPA1) transporter (TC 2.A.36) family. Homodimer; the dimerization is stabilized in the presence of phosphatidic acids.

It is found in the cell projection. The protein resides in the cilium. Its subcellular location is the flagellum membrane. It catalyses the reaction Na(+)(in) + H(+)(out) = Na(+)(out) + H(+)(in). With respect to regulation, gated by voltage and stimulated by cyclic nucleotides which shift the activation voltage closer to resting membrane potential. Not inhibited by common sodium:proton exchanger inhibitors such as amiloride. Functionally, electroneutral sodium:proton antiporter that regulates intracellular pH of sperm along with capacitation and fertility. Activated in response to egg-derived chemoattractants, couples membrane voltage to sodium:proton exchange and transduces membrane hyperpolarization to cytoplasmic alkalization to cAMP signaling and ultimately to sperm motility. The sequence is that of Sperm-specific sodium:proton exchanger from Strongylocentrotus purpuratus (Purple sea urchin).